The primary structure comprises 238 residues: Gem-associated protein 8 (238 aa).

Residues 66 to 127 (AGHPWDSQGQ…LESDSDDEVE (62 aa)) are disordered. 2 stretches are compositionally biased toward polar residues: residues 72–82 (SQGQHMAQQES) and 96–108 (LRNS…STRG). A compositionally biased stretch (acidic residues) spans 113-127 (CEEEELESDSDDEVE). Phosphoserine is present on Ser122. The stretch at 131-164 (SNMEITEELRQYFAQTERHREERRRQQQLDAERL) forms a coiled coil.

As to quaternary structure, part of the core SMN complex that contains SMN1, GEMIN2/SIP1, DDX20/GEMIN3, GEMIN4, GEMIN5, GEMIN6, GEMIN7, GEMIN8 and STRAP/UNRIP. Part of the SMN-Sm complex that contains SMN1, GEMIN2/SIP1, DDX20/GEMIN3, GEMIN4, GEMIN5, GEMIN6, GEMIN7, GEMIN8, STRAP/UNRIP and the Sm proteins SNRPB, SNRPD1, SNRPD2, SNRPD3, SNRPE, SNRPF and SNRPG. Interacts with GEMIN6; the interaction is direct. Interacts with GEMIN7; the interaction is direct. Interacts with SMN1; the interaction is direct. Interacts with GEMIN4; the interaction is direct. In terms of tissue distribution, widely expressed in embryonic tissues (at protein level).

It is found in the nucleus. Its subcellular location is the gem. The protein localises to the cytoplasm. The SMN complex catalyzes the assembly of small nuclear ribonucleoproteins (snRNPs), the building blocks of the spliceosome, and thereby plays an important role in the splicing of cellular pre-mRNAs. Most spliceosomal snRNPs contain a common set of Sm proteins SNRPB, SNRPD1, SNRPD2, SNRPD3, SNRPE, SNRPF and SNRPG that assemble in a heptameric protein ring on the Sm site of the small nuclear RNA to form the core snRNP (Sm core). In the cytosol, the Sm proteins SNRPD1, SNRPD2, SNRPE, SNRPF and SNRPG are trapped in an inactive 6S pICln-Sm complex by the chaperone CLNS1A that controls the assembly of the core snRNP. To assemble core snRNPs, the SMN complex accepts the trapped 5Sm proteins from CLNS1A forming an intermediate. Binding of snRNA inside 5Sm triggers eviction of the SMN complex, thereby allowing binding of SNRPD3 and SNRPB to complete assembly of the core snRNP. The polypeptide is Gem-associated protein 8 (Gemin8) (Mus musculus (Mouse)).